The chain runs to 297 residues: Phosphatidylinositol N-acetylglucosaminyltransferase subunit C (297 aa).

A run of 8 helical transmembrane segments spans residues valine 51–isoleucine 71, leucine 80–phenylalanine 100, tryptophan 117–leucine 137, serine 153–valine 173, serine 174–proline 194, serine 196–leucine 216, serine 227–leucine 244, and glycine 250–isoleucine 270.

Belongs to the PIGC family. Component of the glycosylphosphatidylinositol-N-acetylglucosaminyltransferase (GPI-GnT) complex composed at least by PIGA, PIGC, PIGH, PIGP, PIGQ, PIGY and DPM2. Interacts with PIGQ. Interacts with the heterodimer PIGA:PIGH.

It is found in the endoplasmic reticulum membrane. Its pathway is glycolipid biosynthesis; glycosylphosphatidylinositol-anchor biosynthesis. Part of the glycosylphosphatidylinositol-N-acetylglucosaminyltransferase (GPI-GnT) complex that catalyzes the transfer of N-acetylglucosamine from UDP-N-acetylglucosamine to phosphatidylinositol and participates in the first step of GPI biosynthesis. The sequence is that of Phosphatidylinositol N-acetylglucosaminyltransferase subunit C from Homo sapiens (Human).